Consider the following 225-residue polypeptide: Uracil-DNA glycosylase (225 aa).

The active-site Proton acceptor is the aspartate 65.

Belongs to the uracil-DNA glycosylase (UDG) superfamily. UNG family.

The protein resides in the cytoplasm. It carries out the reaction Hydrolyzes single-stranded DNA or mismatched double-stranded DNA and polynucleotides, releasing free uracil.. Excises uracil residues from the DNA which can arise as a result of misincorporation of dUMP residues by DNA polymerase or due to deamination of cytosine. The protein is Uracil-DNA glycosylase of Bacillus mycoides (strain KBAB4) (Bacillus weihenstephanensis).